We begin with the raw amino-acid sequence, 253 residues long: Triosephosphate isomerase, cytosolic (253 aa).

Substrate-binding residues include N10 and K12. Residue H96 is the Electrophile of the active site. Catalysis depends on E166, which acts as the Proton acceptor.

The protein belongs to the triosephosphate isomerase family. Homodimer.

The protein resides in the cytoplasm. The catalysed reaction is D-glyceraldehyde 3-phosphate = dihydroxyacetone phosphate. It participates in carbohydrate biosynthesis; gluconeogenesis. The protein operates within carbohydrate degradation; glycolysis; D-glyceraldehyde 3-phosphate from glycerone phosphate: step 1/1. The sequence is that of Triosephosphate isomerase, cytosolic from Secale cereale (Rye).